Consider the following 109-residue polypeptide: Transcription initiation factor IIA subunit 2 (109 aa).

Belongs to the TFIIA subunit 2 family. In terms of assembly, TFIIA is a heterodimer of the large unprocessed subunit 1 and a small subunit gamma. It was originally believed to be a heterotrimer of an alpha (p35), a beta (p19) and a gamma subunit (p12). Interacts with NCOA6 general coactivator. TFIIA forms a complex with TBP. Interacts with HSF1 (via transactivation domain). Part of TBP-based Pol II pre-initiation complex (PIC), in which Pol II core assembles with general transcription factors and other specific initiation factors including GTF2E1, GTF2E2, GTF2F1, GTF2F2, TCEA1, ERCC2, ERCC3, GTF2H2, GTF2H3, GTF2H4, GTF2H5, GTF2A1, GTF2A2, GTF2B and TBP; this large multi-subunit PIC complex mediates DNA unwinding and targets Pol II core to the transcription start site where the first phosphodiester bond forms. (Microbial infection) Interacts with SV40 Large T antigen.

It is found in the nucleus. TFIIA is a component of the transcription machinery of RNA polymerase II and plays an important role in transcriptional activation. TFIIA in a complex with TBP mediates transcriptional activity. The protein is Transcription initiation factor IIA subunit 2 (GTF2A2) of Homo sapiens (Human).